The sequence spans 131 residues: UPF0146 protein PH0209 (131 aa).

Belongs to the UPF0146 family.

This is UPF0146 protein PH0209 from Pyrococcus horikoshii (strain ATCC 700860 / DSM 12428 / JCM 9974 / NBRC 100139 / OT-3).